Reading from the N-terminus, the 172-residue chain is Bifunctional protein PyrR (172 aa).

Substrate contacts are provided by residues 36-37 (TG), Arg-77, 94-102 (DDVLMSGRT), and Val-151. The PRPP-binding signature appears at 90–102 (LVLVDDVLMSGRT).

It belongs to the purine/pyrimidine phosphoribosyltransferase family. PyrR subfamily.

The catalysed reaction is UMP + diphosphate = 5-phospho-alpha-D-ribose 1-diphosphate + uracil. Regulates the transcription of the pyrimidine nucleotide (pyr) operon in response to exogenous pyrimidines. In terms of biological role, also displays a weak uracil phosphoribosyltransferase activity which is not physiologically significant. The sequence is that of Bifunctional protein PyrR from Pseudomonas putida (Arthrobacter siderocapsulatus).